The sequence spans 561 residues: DNA ligase (561 aa).

Glu249 provides a ligand contact to ATP. Lys251 acts as the N6-AMP-lysine intermediate in catalysis. ATP is bound by residues Arg256, Arg271, Glu301, Phe340, Arg417, and Lys423.

This sequence belongs to the ATP-dependent DNA ligase family. Mg(2+) is required as a cofactor.

The catalysed reaction is ATP + (deoxyribonucleotide)n-3'-hydroxyl + 5'-phospho-(deoxyribonucleotide)m = (deoxyribonucleotide)n+m + AMP + diphosphate.. Its function is as follows. DNA ligase that seals nicks in double-stranded DNA during DNA replication, DNA recombination and DNA repair. This is DNA ligase from Methanothermobacter thermautotrophicus (strain ATCC 29096 / DSM 1053 / JCM 10044 / NBRC 100330 / Delta H) (Methanobacterium thermoautotrophicum).